Consider the following 202-residue polypeptide: dITP/XTP pyrophosphatase (202 aa).

7–12 (SNNPGK) contacts substrate. Mg(2+) contacts are provided by glutamate 39 and aspartate 68. The active-site Proton acceptor is aspartate 68. Substrate contacts are provided by residues alanine 69, 157-160 (FGFD), lysine 180, and 185-186 (HR).

Belongs to the HAM1 NTPase family. As to quaternary structure, homodimer. Mg(2+) is required as a cofactor.

The catalysed reaction is XTP + H2O = XMP + diphosphate + H(+). The enzyme catalyses dITP + H2O = dIMP + diphosphate + H(+). It catalyses the reaction ITP + H2O = IMP + diphosphate + H(+). In terms of biological role, pyrophosphatase that catalyzes the hydrolysis of nucleoside triphosphates to their monophosphate derivatives, with a high preference for the non-canonical purine nucleotides XTP (xanthosine triphosphate), dITP (deoxyinosine triphosphate) and ITP. Seems to function as a house-cleaning enzyme that removes non-canonical purine nucleotides from the nucleotide pool, thus preventing their incorporation into DNA/RNA and avoiding chromosomal lesions. The sequence is that of dITP/XTP pyrophosphatase from Polaromonas naphthalenivorans (strain CJ2).